We begin with the raw amino-acid sequence, 435 residues long: Protein phosphatase 2C homolog 2 (435 aa).

In terms of domain architecture, PPM-type phosphatase spans 23–298; sequence IYGVSAMQGW…DNMTMIIIGL (276 aa). 4 residues coordinate Mn(2+): Asp71, Gly72, Asp240, and Asp289. Residues 366–435 form a disordered region; that stretch reads DQTEEDRDLP…TSGAPEKSTS (70 aa). Residues 381 to 392 are compositionally biased toward basic and acidic residues; sequence ELPDSARNEREG. Low complexity predominate over residues 409 to 418; sequence GSSASTSEST. Over residues 419 to 435 the composition is skewed to polar residues; that stretch reads VTPAGSSTSGAPEKSTS.

Belongs to the PP2C family. Mg(2+) serves as cofactor. Mn(2+) is required as a cofactor.

The protein localises to the cytoplasm. It localises to the nucleus. It carries out the reaction O-phospho-L-seryl-[protein] + H2O = L-seryl-[protein] + phosphate. It catalyses the reaction O-phospho-L-threonyl-[protein] + H2O = L-threonyl-[protein] + phosphate. Its function is as follows. Dephosphorylating regulator for many key proteins. Dephosphorylates phosphoglycerate kinase pgk1 at least on 'Ser-203' to negatively regulate targeting of pgk1 to the mitochondrion, thereby negatively regulating production of acetyl-CoA and consequently aflatoxin biosynthesis. The chain is Protein phosphatase 2C homolog 2 from Aspergillus flavus (strain ATCC 200026 / FGSC A1120 / IAM 13836 / NRRL 3357 / JCM 12722 / SRRC 167).